A 212-amino-acid polypeptide reads, in one-letter code: Imidazole glycerol phosphate synthase subunit HisH (212 aa).

Residues 3 to 212 enclose the Glutamine amidotransferase type-1 domain; sequence TVAVIDYGMG…QNFAAWDGRW (210 aa). Residue C81 is the Nucleophile of the active site. Active-site residues include H190 and E192.

In terms of assembly, heterodimer of HisH and HisF.

It localises to the cytoplasm. It carries out the reaction 5-[(5-phospho-1-deoxy-D-ribulos-1-ylimino)methylamino]-1-(5-phospho-beta-D-ribosyl)imidazole-4-carboxamide + L-glutamine = D-erythro-1-(imidazol-4-yl)glycerol 3-phosphate + 5-amino-1-(5-phospho-beta-D-ribosyl)imidazole-4-carboxamide + L-glutamate + H(+). It catalyses the reaction L-glutamine + H2O = L-glutamate + NH4(+). Its pathway is amino-acid biosynthesis; L-histidine biosynthesis; L-histidine from 5-phospho-alpha-D-ribose 1-diphosphate: step 5/9. Its function is as follows. IGPS catalyzes the conversion of PRFAR and glutamine to IGP, AICAR and glutamate. The HisH subunit catalyzes the hydrolysis of glutamine to glutamate and ammonia as part of the synthesis of IGP and AICAR. The resulting ammonia molecule is channeled to the active site of HisF. The chain is Imidazole glycerol phosphate synthase subunit HisH from Pseudomonas savastanoi pv. phaseolicola (strain 1448A / Race 6) (Pseudomonas syringae pv. phaseolicola (strain 1448A / Race 6)).